Here is a 20-residue protein sequence, read N- to C-terminus: Thylakoid lumenal 14.7 kDa protein (20 aa).

Positions 1 to 20 are disordered; sequence KTGVNKPELLPKEETTVIDV. The segment covering 9-20 has biased composition (basic and acidic residues); that stretch reads LLPKEETTVIDV.

Its subcellular location is the plastid. It is found in the chloroplast thylakoid lumen. The protein is Thylakoid lumenal 14.7 kDa protein of Spinacia oleracea (Spinach).